We begin with the raw amino-acid sequence, 309 residues long: Homoserine kinase (309 aa).

Position 91-101 (91-101 (PIGSGLGSSAC)) interacts with ATP.

It belongs to the GHMP kinase family. Homoserine kinase subfamily.

The protein resides in the cytoplasm. The enzyme catalyses L-homoserine + ATP = O-phospho-L-homoserine + ADP + H(+). The protein operates within amino-acid biosynthesis; L-threonine biosynthesis; L-threonine from L-aspartate: step 4/5. Catalyzes the ATP-dependent phosphorylation of L-homoserine to L-homoserine phosphate. The chain is Homoserine kinase from Cronobacter sakazakii (strain ATCC BAA-894) (Enterobacter sakazakii).